The chain runs to 393 residues: Putative F-box/kelch-repeat protein At1g32430 (393 aa).

Residues 1-47 enclose the F-box domain; the sequence is MANKEKLPWDLEEEILSRVPPTSLDRFKTVCKRWNALFNDKTFINNH. 2 Kelch repeats span residues 151 to 199 and 308 to 357; these read YMKD…NLSV and WIYV…QVQF.

The protein is Putative F-box/kelch-repeat protein At1g32430 of Arabidopsis thaliana (Mouse-ear cress).